Consider the following 219-residue polypeptide: UPF0502 protein GSU0233 (219 aa).

It belongs to the UPF0502 family.

The chain is UPF0502 protein GSU0233 from Geobacter sulfurreducens (strain ATCC 51573 / DSM 12127 / PCA).